The sequence spans 263 residues: ABC transporter I family member 17 (263 aa).

In terms of domain architecture, ABC transporter spans 29–260 (IRVHDLTRVA…THPMAQRFLQ (232 aa)). 62-69 (GPSGSGKS) contacts ATP.

It belongs to the ABC transporter superfamily. ABCI family.

This chain is ABC transporter I family member 17 (ABCI17), found in Arabidopsis thaliana (Mouse-ear cress).